The sequence spans 211 residues: Dof zinc finger protein 5 (211 aa).

A disordered region spans residues 37 to 101; the sequence is FVVAREKVEP…QRRLQDSAEA (65 aa). Residues 68-80 are compositionally biased toward basic and acidic residues; that stretch reads IKREAADRDEEQR. Residues 109–163 form a Dof-type zinc finger; that stretch reads LPCPRCRSRDTKFCYFNNYNVNQPRHFCKACHRYWTAGGALRNVPVGAGRRKNRP. Residues Cys111, Cys114, Cys136, and Cys139 each contribute to the Zn(2+) site. The interval 191 to 211 is disordered; sequence SPTSPSPVYTDRWPVTPDRPF.

The protein resides in the nucleus. Transcription factor that may transactivate seed storage protein genes in developing seeds. This chain is Dof zinc finger protein 5, found in Oryza sativa subsp. japonica (Rice).